Consider the following 645-residue polypeptide: Minor extracellular protease Epr (645 aa).

Positions 1-27 (MKNMSCKLVVSVTLFFSFLTIGPLAHA) are cleaved as a signal peptide. The propeptide occupies 28-103 (QNSSEKEVIV…AADSTDFKVL (76 aa)). Positions 115-382 (QWNLEPIQVK…YGLIQYKAQA (268 aa)) constitute a Peptidase S8 domain. Residues Asp142, His172, and Ser326 each act as charge relay system in the active site. Disordered regions lie at residues 490–577 (KQAK…KTAL) and 591–645 (AEAK…KPKK). Residues 491-508 (QAKDKVAKAEKSKKKTDV) show a composition bias toward basic and acidic residues. Positions 522 to 547 (SEKTSLQKRLNKVKSTNLKTAQQSVS) are enriched in polar residues. Over residues 592–610 (EAKKVETAKAKVKKAEKDK) the composition is skewed to basic and acidic residues.

It belongs to the peptidase S8 family. May undergo two steps of processing in its passage through the cell membrane: removal of the N-terminal signal sequence and cleavage of the C-terminal domain. Several active forms of Epr with molecular masses between 40 and 34 kDa were found in the medium of B.subtilis cultures. The size variation of the active forms expressed by the complete epr gene appears to be the result of partial removal of the C-terminus either by processing or degradation.

It is found in the secreted. The protein localises to the cell wall. Its activity is regulated as follows. Requires Ca(2+) for stability. Activity is inhibited by phenylmethylsulfonyl fluoride (PMSF) and EDTA. In terms of biological role, serine protease. Involved in the production of the competence and sporulation stimulating factor CSF. In addition, is essential for swarming motility. Plays a key role in DegU-mediated swarming motility. The protease activity is dispensable for swarming. Not essential for growth or sporulation. The sequence is that of Minor extracellular protease Epr from Bacillus subtilis (strain 168).